The chain runs to 790 residues: MTQLPQPLTPDELQKIDAYWRAANYLSVGQIYLLDNPLLQTPLTLQHIKPRLLGHWGTTPGLNFIYAHLNRIIRRDDLNMIYIAGPGHGGPALVANTYLEGTYSEHYPDISQDIQGMKHLFRQFSFPGGIGSHATPEIPGSIHEGGELGYALSHAFGAVFDNPDLIAACVVGDGEAETGPLATAWHSNKFLNPVHDGAVLPILHLNGYKIANPTILARISREELDQLFQGYGYQPYIVEGEDPLTMHQLMAGTLDQVLAEIRSIQTRARLDGVTQYPRWPMIILRTPKGWTGPATVDGLKTEGSWRSHQVPLSELAKKPEHIQQLEAWLRSYRPEELFDTQGRLVEPLQTLAPLGNRRMGANPHANGGSLMKQLRMPDFRKYAVEIVQPGQIEAESTRIMGSFLRDIMCLNLKTCNFRVFGPDETASNRLGSLYDVTPKTWLAETLPEDEHLAPDGRVMEILSEHTCQGWLEGYLLTGRHGLFSCYEAFIHIVDSMFNQHAKWLKVSKEIPWRRPIASLNYLLTSHVWRQDHNGFSHQDPGFIDHVINKKADTIRIYLPPDANCLLYITDKCLRSRNFVNVIVAGKQPQLQWLDMDAAIKHCTAGIGIWGWASNDQAGEPDVVIACAGDVPTIEVLAAVSILREHLPDLRIRVINVVDLMTLQHDREHPQGLSDREFDTLFTTDKPIIFAYHGYPWLIHRLTYRRTNHANLHVRGYKEEGTTTTPFDMTVLNDMDRFHLVDDVIDRVPHLGYKAAYLRQIMRDKLVEHREYINRHGEDMPEIRDWKWTAP.

This sequence belongs to the XFP family. The cofactor is thiamine diphosphate.

The sequence is that of Probable phosphoketolase from Nitrosomonas europaea (strain ATCC 19718 / CIP 103999 / KCTC 2705 / NBRC 14298).